We begin with the raw amino-acid sequence, 555 residues long: Dihydroxy-acid dehydratase (555 aa).

Asp78 lines the Mg(2+) pocket. Cys119 contributes to the [2Fe-2S] cluster binding site. Residues Asp120 and Lys121 each contribute to the Mg(2+) site. Position 121 is an N6-carboxylysine (Lys121). Cys191 provides a ligand contact to [2Fe-2S] cluster. Glu444 serves as a coordination point for Mg(2+). The active-site Proton acceptor is Ser470.

Belongs to the IlvD/Edd family. In terms of assembly, homodimer. Requires [2Fe-2S] cluster as cofactor. The cofactor is Mg(2+).

It catalyses the reaction (2R)-2,3-dihydroxy-3-methylbutanoate = 3-methyl-2-oxobutanoate + H2O. The catalysed reaction is (2R,3R)-2,3-dihydroxy-3-methylpentanoate = (S)-3-methyl-2-oxopentanoate + H2O. It participates in amino-acid biosynthesis; L-isoleucine biosynthesis; L-isoleucine from 2-oxobutanoate: step 3/4. It functions in the pathway amino-acid biosynthesis; L-valine biosynthesis; L-valine from pyruvate: step 3/4. Functions in the biosynthesis of branched-chain amino acids. Catalyzes the dehydration of (2R,3R)-2,3-dihydroxy-3-methylpentanoate (2,3-dihydroxy-3-methylvalerate) into 2-oxo-3-methylpentanoate (2-oxo-3-methylvalerate) and of (2R)-2,3-dihydroxy-3-methylbutanoate (2,3-dihydroxyisovalerate) into 2-oxo-3-methylbutanoate (2-oxoisovalerate), the penultimate precursor to L-isoleucine and L-valine, respectively. The sequence is that of Dihydroxy-acid dehydratase from Nitratidesulfovibrio vulgaris (strain DSM 19637 / Miyazaki F) (Desulfovibrio vulgaris).